A 315-amino-acid chain; its full sequence is MPALSCRFYQHKFPEVEDVVMVNVRSIAEMGAYVSLLEYNNIEGMILLSELSRRRIRSINKLIRIGRNECVVVIRVDKEKGYIDLSKRRVSPEEAIKCEDKFTKSKTVYSILRHVAEVLEYTKDEQLESLFQRTAWVFDDKYKRPGYGAYDAFKHAVSDPAILDSLDLTEEERRVLIDNINRRLTPQAVKIRADIEVACYGYEGIDAVKEALRAGLNCSTENMPIKINLIAPPRYVMTTTTLERTEGLSVLNQAMAVIKEKIEEKRGVFNVQMEPKVVTDTDETELARQLERLERENAEVDGDDDAEEMEAKTED.

Positions 17–88 (EDVVMVNVRS…EKGYIDLSKR (72 aa)) constitute an S1 motif domain. Residues Ser49 and Ser52 each carry the phosphoserine modification. The segment at 292 to 315 (RLERENAEVDGDDDAEEMEAKTED) is disordered. Positions 299-308 (EVDGDDDAEE) are enriched in acidic residues.

It belongs to the eIF-2-alpha family. As to quaternary structure, eukaryotic translation initiation factor 2 eIF2 is a heterotrimeric complex composed of an alpha (EIF2S1), a beta (EIF2S2) and a gamma (EIF2S3) chain. Phosphorylation at Ser-49 and Ser-52 stabilizes the eIF-2/GDP/eIF2B complex and prevents GDP/GTP exchange reaction, thus impairing the recycling of eIF-2 between successive rounds of initiation and leading to global inhibition of translation, while concomitantly initiating the preferential translation of integrated stress response (ISR)-specific mRNAs.

It localises to the cytoplasm. The protein resides in the stress granule. It is found in the cytosol. With respect to regulation, activity is regulated by phosphorylation at Ser-49 and Ser-52, which stabilizes the eIF2/GDP/eIF2B complex and prevents the eIF2B-mediated exchange of GDP for GTP, thereby preventing the formation of the 43S pre-initiation complex (43S PIC). This results in the global attenuation of 5' cap-dependent protein synthesis and concomitant translation of ISR-specific mRNAs that contain a short upstream open reading frame (uORF) in their 5' UTR. Its function is as follows. Member of the eIF2 complex that functions in the early steps of protein synthesis by forming a ternary complex with GTP and initiator tRNA. This complex binds to a 40S ribosomal subunit, followed by mRNA binding to form a 43S pre-initiation complex. Junction of the 60S ribosomal subunit to form the 80S initiation complex is preceded by hydrolysis of the GTP bound to eIF2 and release of an eIF2-GDP binary complex. In order for eIF2 to recycle and catalyze another round of initiation, the GDP bound to eIF2 must exchange with GTP by way of a reaction catalyzed by eIF2B. EIF2S1/eIF2-alpha is a key component of the integrated stress response (ISR), required for adaptation to various stress: phosphorylation by metabolic-stress sensing protein kinases (EIF2AK1/HRI, EIF2AK2/PKR, EIF2AK3/PERK and EIF2AK4/GCN2) in response to stress converts EIF2S1/eIF2-alpha in a global protein synthesis inhibitor, leading to a attenuation of cap-dependent translation, while concomitantly initiating the preferential translation of ISR-specific mRNAs, such as the transcriptional activators ATF4 and QRICH1. The sequence is that of Eukaryotic translation initiation factor 2 subunit 1 (EIF2S1) from Gallus gallus (Chicken).